Consider the following 336-residue polypeptide: Sex determination protein tasselseed-2 (336 aa).

59–83 (IVTGGARGIGEAIVRLFAKHGARVV) contacts NAD(+). Residue S194 participates in substrate binding. The active-site Proton acceptor is Y207.

This sequence belongs to the short-chain dehydrogenases/reductases (SDR) family.

Functionally, required for stage-specific floral organ abortion. In Zea mays (Maize), this protein is Sex determination protein tasselseed-2 (TS2).